Reading from the N-terminus, the 172-residue chain is Zinc finger C2HC domain-containing protein 1B (172 aa).

C2HC/C3H-type zinc fingers lie at residues 14–43 (KLFPCEVCGRCFATDVLERHGPICKKVFNK) and 117–146 (DYIQCPYCMRRFNETAAQRHINFCKNQTSR). Zn(2+) contacts are provided by cysteine 18, cysteine 21, histidine 33, cysteine 37, cysteine 121, cysteine 124, histidine 136, and cysteine 140.

Belongs to the ZC2HC1 family. The cofactor is Zn(2+).

The sequence is that of Zinc finger C2HC domain-containing protein 1B (Zc2hc1b) from Mus musculus (Mouse).